We begin with the raw amino-acid sequence, 292 residues long: Peroxisomal 2,4-dienoyl-CoA reductase [(3E)-enoyl-CoA-producing] (292 aa).

Ala2 is subject to N-acetylalanine. NADP(+) is bound by residues 35 to 40 (GGGSGI), 60 to 64 (RSLQK), and Asp86. Arg60 lines the substrate pocket. Lys64 carries the post-translational modification N6-acetyllysine. Residues Arg88, Phe118, and 126–128 (SFN) contribute to the substrate site. Lys151 is subject to N6-acetyllysine. NADP(+) is bound by residues Lys182 and 208 to 214 (PGAISGT). Arg219 contacts substrate. Position 287 is a phosphoserine (Ser287). A Microbody targeting signal motif is present at residues 290-292 (AKL). Lys291 is modified (N6-acetyllysine).

This sequence belongs to the short-chain dehydrogenases/reductases (SDR) family. 2,4-dienoyl-CoA reductase subfamily. In terms of assembly, monomer, dimer and oligomer.

The protein resides in the peroxisome. The enzyme catalyses a (2E,4Z)-dienoyl-CoA + NADPH + H(+) = a 4,5-saturated-(3E)-enoyl-CoA + NADP(+). It catalyses the reaction a (2E,4E)-dienoyl-CoA + NADPH + H(+) = a 4,5-saturated-(3E)-enoyl-CoA + NADP(+). It carries out the reaction (2E,4E)-hexadienoyl-CoA + NADPH + H(+) = (3E)-hexenoyl-CoA + NADP(+). The catalysed reaction is (2E,4E)-decadienoyl-CoA + NADPH + H(+) = (3E)-decenoyl-CoA + NADP(+). The enzyme catalyses (2E,4Z,7Z,10Z,13Z,16Z,19Z)-docosaheptaenoyl-CoA + NADPH + H(+) = (3E,7Z,10Z,13Z,16Z,19Z)-docosahexaenoyl-CoA + NADP(+). Auxiliary enzyme of beta-oxidation. Participates in the degradation of unsaturated fatty enoyl-CoA esters having double bonds in both even- and odd-numbered positions in peroxisome. Catalyzes the NADP-dependent reduction of 2,4-dienoyl-CoA to yield trans-3-enoyl-CoA. Has activity towards short and medium chain 2,4-dienoyl-CoAs, but also towards 2,4,7,10,13,16,19-docosaheptaenoyl-CoA, suggesting that it does not constitute a rate limiting step in the peroxisomal degradation of docosahexaenoic acid. In Mus musculus (Mouse), this protein is Peroxisomal 2,4-dienoyl-CoA reductase [(3E)-enoyl-CoA-producing] (Decr2).